Reading from the N-terminus, the 410-residue chain is Exopolygalacturonase (410 aa).

Positions Met-1–Gly-22 are cleaved as a signal peptide. An N-linked (GlcNAc...) asparagine glycan is attached at Asn-89. PbH1 repeat units lie at residues Cys-192–Asp-218, Ser-219–Pro-240, Thr-242–Ser-262, Val-272–Ala-293, and Ala-337–Asp-377. Residue Asp-233 is the Proton donor of the active site. Cys-235 and Cys-252 form a disulfide bridge. Residue Asn-246 is glycosylated (N-linked (GlcNAc...) asparagine). The active site involves His-256. An N-linked (GlcNAc...) asparagine glycan is attached at Asn-349. Cys-364 and Cys-370 form a disulfide bridge. Asn-387 carries an N-linked (GlcNAc...) asparagine glycan. Residues Cys-393 and Cys-409 are joined by a disulfide bond.

The protein belongs to the glycosyl hydrolase 28 family. In terms of tissue distribution, pollen.

It localises to the secreted. Its subcellular location is the cell wall. It carries out the reaction [(1-&gt;4)-alpha-D-galacturonosyl](n) + H2O = alpha-D-galacturonate + [(1-&gt;4)-alpha-D-galacturonosyl](n-1). In terms of biological role, may function in depolymerizing pectin during pollen development, germination, and tube growth. Acts as an exo-polygalacturonase. This Zea mays (Maize) protein is Exopolygalacturonase (PG1).